Reading from the N-terminus, the 191-residue chain is MKRILFVILSTMLLASCVLPEATQQPAPVTPVEPKEKQETTPIEPSEKVLQPPKIQSINWNGIVQPLIEEMAKAHGVETGKVLLVDSVKNNTNGSLRTLKATEAIIDAISNKHIFQIVSRSQIHLARQALGLSTEDSLGLRSKSIGLARYLSADYVLYSVVSSNKGQRDLEMQLMLVKTGEILWSGHRDIN.

An N-terminal signal peptide occupies residues 1–16 (MKRILFVILSTMLLAS). The N-palmitoyl cysteine moiety is linked to residue cysteine 17. Cysteine 17 carries S-diacylglycerol cysteine lipidation. The disordered stretch occupies residues 25–48 (QPAPVTPVEPKEKQETTPIEPSEK).

The protein belongs to the LpoB family. Interacts with PBP1b.

Its subcellular location is the cell outer membrane. Functionally, regulator of peptidoglycan synthesis that is essential for the function of penicillin-binding protein 1B (PBP1b). In Xenorhabdus nematophila (strain ATCC 19061 / DSM 3370 / CCUG 14189 / LMG 1036 / NCIMB 9965 / AN6), this protein is Penicillin-binding protein activator LpoB.